The chain runs to 907 residues: Leucine-rich repeat-containing G-protein coupled receptor 5 (907 aa).

Positions 1 to 21 are cleaved as a signal peptide; that stretch reads MDTSCVHMLLSLLALLQLVAA. Residues 22–561 lie on the Extracellular side of the membrane; it reads GSSPGPDAIP…EHLFGSWLIR (540 aa). An LRRNT domain is found at 25-66; sequence PGPDAIPRGCPSHCHCELDGRMLLRVDCSDLGLSELPSNLSV. 2 disulfide bridges follow: Cys-34-Cys-40 and Cys-38-Cys-52. N-linked (GlcNAc...) asparagine glycosylation is found at Asn-63 and Asn-77. LRR repeat units follow at residues 67–88, 91–112, 115–136, 139–160, 163–184, 187–208, 211–232, 235–256, 258–279, 282–303, 306–325, 329–350, 353–374, 375–396, 399–420, and 423–446; these read FTSY…LLHR, FLEE…AFTG, SLKV…ALQN, SLQS…CFSG, SLRH…AFRS, ALQA…AFGN, SLVV…CFDG, SLET…IKTL, NLKE…AFVG, SLIT…AFQH, ELRT…PHLT, TLES…VCDQ, NLQV…SGCQ, KLQK…TFQQ, NLRS…AFST, and SLIK…HGLT. Asn-208 carries N-linked (GlcNAc...) asparagine glycosylation. Cysteines 348 and 373 form a disulfide. An intrachain disulfide couples Cys-479 to Cys-541. The chain crosses the membrane as a helical span at residues 562-582; the sequence is IGVWTTAVLALSCNALVALTV. Topologically, residues 583–593 are cytoplasmic; sequence FRTPLYISSIK. The helical transmembrane segment at 594 to 614 threads the bilayer; sequence LLIGVIAVVDILMGVSSAVLA. Topologically, residues 615–638 are extracellular; the sequence is AVDAFTFGRFAQHGAWWEDGIGCQ. Cys-637 and Cys-712 form a disulfide bridge. The helical transmembrane segment at 639–659 threads the bilayer; sequence IVGFLSIFASESSIFLLTLAA. Residues 660 to 682 lie on the Cytoplasmic side of the membrane; the sequence is LERGFSVKCSSKFEVKAPLFSLR. Residues 683-703 traverse the membrane as a helical segment; that stretch reads AIVLLCVLLALTIATIPLLGG. Topologically, residues 704–723 are extracellular; it reads SKYNASPLCLPLPFGEPSTT. The chain crosses the membrane as a helical span at residues 724–744; sequence GYMVALVLLNSLCFLIMTIAY. Over 745–767 the chain is Cytoplasmic; it reads TKLYCSLEKGELENLWDCSMVKH. The chain crosses the membrane as a helical span at residues 768–788; sequence IALLLFANCILYCPVAFLSFS. Topologically, residues 789-802 are extracellular; sequence SLLNLTFISPDVIK. Asn-792 is a glycosylation site (N-linked (GlcNAc...) asparagine). A helical transmembrane segment spans residues 803–823; that stretch reads FILLVIVPLPSCLNPLLYIVF. Residues 824-907 are Cytoplasmic-facing; the sequence is NPHFKEDMGS…LSSVAFVPCL (84 aa).

It belongs to the G-protein coupled receptor 1 family. As to quaternary structure, identified in a complex composed of RNF43, LGR5 and RSPO1. Also interacts with other R-spondin ligands, including RSPO2, RSPO3 and RSPO4. As to expression, expressed in the intestinal epithelium (at protein level). Expressed in the gonads, the adrenal gland, and in the brain. In the central nervous system expression is restricted to the olfactory bulb. In the adrenal gland detected only in the neural-crest derived chromaffin cells of the medulla, but not in the cells of the adrenal cortex. In the gonads, the expression is high in Graafian follicle, but absent from primary and secondary follicles. In the intestine, exclusively expressed in cycling crypt base columnar cells. Expressed in the lower bulge and secondary germ area of telogen hair follicles and in the lower outer root sheath of anagen hair follicle.

The protein localises to the cell membrane. Its subcellular location is the golgi apparatus. The protein resides in the trans-Golgi network membrane. Its function is as follows. Receptor for R-spondins that potentiates the canonical Wnt signaling pathway and acts as a stem cell marker of the intestinal epithelium and the hair follicle. Upon binding to R-spondins (RSPO1, RSPO2, RSPO3 or RSPO4), associates with phosphorylated LRP6 and frizzled receptors that are activated by extracellular Wnt receptors, triggering the canonical Wnt signaling pathway to increase expression of target genes. In contrast to classical G-protein coupled receptors, does not activate heterotrimeric G-proteins to transduce the signal. Involved in the development and/or maintenance of the adult intestinal stem cells during postembryonic development. The polypeptide is Leucine-rich repeat-containing G-protein coupled receptor 5 (Lgr5) (Mus musculus (Mouse)).